We begin with the raw amino-acid sequence, 82 residues long: RNA-binding protein Hfq (82 aa).

Residues 11–71 (DTFLNSVRKS…ISTIMPAQPV (61 aa)) enclose the Sm domain.

The protein belongs to the Hfq family. In terms of assembly, homohexamer.

In terms of biological role, RNA chaperone that binds small regulatory RNA (sRNAs) and mRNAs to facilitate mRNA translational regulation in response to envelope stress, environmental stress and changes in metabolite concentrations. Also binds with high specificity to tRNAs. This chain is RNA-binding protein Hfq, found in Caulobacter vibrioides (strain ATCC 19089 / CIP 103742 / CB 15) (Caulobacter crescentus).